A 153-amino-acid chain; its full sequence is UPF0260 protein YcgN (153 aa).

Belongs to the UPF0260 family.

The chain is UPF0260 protein YcgN from Salmonella agona (strain SL483).